A 93-amino-acid polypeptide reads, in one-letter code: Putative regulatory protein Cthe_1316 (93 aa).

A disordered region spans residues 74–93 (RLNTKEAEDVEVDDEEEIDE). Residues 81 to 93 (EDVEVDDEEEIDE) are compositionally biased toward acidic residues.

It belongs to the RemA family.

The protein is Putative regulatory protein Cthe_1316 of Acetivibrio thermocellus (strain ATCC 27405 / DSM 1237 / JCM 9322 / NBRC 103400 / NCIMB 10682 / NRRL B-4536 / VPI 7372) (Clostridium thermocellum).